The sequence spans 244 residues: 7-cyano-7-deazaguanine synthase (244 aa).

An ATP-binding site is contributed by 14–24 (FSGGQDSATCV). Cysteine 202, cysteine 217, cysteine 220, and cysteine 223 together coordinate Zn(2+).

Belongs to the QueC family. Zn(2+) is required as a cofactor.

The catalysed reaction is 7-carboxy-7-deazaguanine + NH4(+) + ATP = 7-cyano-7-deazaguanine + ADP + phosphate + H2O + H(+). The protein operates within purine metabolism; 7-cyano-7-deazaguanine biosynthesis. In terms of biological role, catalyzes the ATP-dependent conversion of 7-carboxy-7-deazaguanine (CDG) to 7-cyano-7-deazaguanine (preQ(0)). The chain is 7-cyano-7-deazaguanine synthase from Burkholderia cenocepacia (strain ATCC BAA-245 / DSM 16553 / LMG 16656 / NCTC 13227 / J2315 / CF5610) (Burkholderia cepacia (strain J2315)).